The sequence spans 426 residues: uncharacterized protein (426 aa).

This is an uncharacterized protein from Acidianus filamentous virus 1 (isolate United States/Yellowstone) (AFV-1).